Consider the following 136-residue polypeptide: uncharacterized protein (136 aa).

This is an uncharacterized protein from Bacillus subtilis (strain 168).